A 681-amino-acid polypeptide reads, in one-letter code: Epithelial splicing regulatory protein 1 (681 aa).

RRM domains follow at residues 225-302 (TVVR…KATG), 326-406 (VIVR…RSTA), and 445-525 (DCIR…QCSA). Position 543 is a phosphoserine (S543). The residue at position 582 (R582) is an Omega-N-methylarginine.

This sequence belongs to the ESRP family. Epithelial cell-specific.

Its subcellular location is the nucleus. In terms of biological role, mRNA splicing factor that regulates the formation of epithelial cell-specific isoforms. Specifically regulates the expression of FGFR2-IIIb, an epithelial cell-specific isoform of FGFR2. Also regulates the splicing of CD44, CTNND1, ENAH, 3 transcripts that undergo changes in splicing during the epithelial-to-mesenchymal transition (EMT). Acts by directly binding specific sequences in mRNAs. Binds the GU-rich sequence motifs in the ISE/ISS-3, a cis-element regulatory region present in the mRNA of FGFR2. Regulates splicing and expression of genes involved in inner ear development, auditory hair cell differentiation, and cell fate specification in the cochlear epithelium. The protein is Epithelial splicing regulatory protein 1 (ESRP1) of Homo sapiens (Human).